The sequence spans 132 residues: Global transcriptional regulator Spx (132 aa).

Cys-10 and Cys-13 form a disulfide bridge.

This sequence belongs to the ArsC family. Spx subfamily. As to quaternary structure, interacts with the C-terminal domain of the alpha subunit of the RNAP.

The protein resides in the cytoplasm. Global transcriptional regulator that plays a key role in stress response and exerts either positive or negative regulation of genes. Acts by interacting with the C-terminal domain of the alpha subunit of the RNA polymerase (RNAP). This interaction can enhance binding of RNAP to the promoter region of target genes and stimulate their transcription, or block interaction of RNAP with activator. This chain is Global transcriptional regulator Spx, found in Enterococcus faecalis (strain ATCC 700802 / V583).